The following is a 150-amino-acid chain: MQKAIRPYESPWTKTVPGNSIFLLKNEDKPSSSSSSLSWLTSGSPKPTSISNKRSSNLVVMENAVVVFARRGCCLGHVAKRLLLTHGVNPVVVEIGEEDNNNYDNIVSDKEKLPMMYIGGKLFGGLENLMAAHINGDLVPTLRQAGALWL.

A disordered region spans residues 30–52 (PSSSSSSLSWLTSGSPKPTSISN). Positions 31 to 44 (SSSSSSLSWLTSGS) are enriched in low complexity. The 97-residue stretch at 53–149 (KRSSNLVVME…PTLRQAGALW (97 aa)) folds into the Glutaredoxin domain. Cysteine 73 is a [2Fe-2S] cluster binding site. The short motif at 147 to 150 (ALWL) is the Responsive for interaction with TGA factors element.

The protein belongs to the glutaredoxin family. CC-type subfamily.

It localises to the cytoplasm. The protein resides in the nucleus. May only reduce GSH-thiol disulfides, but not protein disulfides. The protein is Monothiol glutaredoxin-S13 (GRXS13) of Arabidopsis thaliana (Mouse-ear cress).